Reading from the N-terminus, the 75-residue chain is MQKNIHPKYFEIRAICSCGNIIPTYSTLDQHLNLDVCSACHPFYTGKQRRVNTRGRVERFNKRFSLSIMNSKKKE.

Cysteine 16, cysteine 18, cysteine 37, and cysteine 40 together coordinate Zn(2+).

This sequence belongs to the bacterial ribosomal protein bL31 family. Type A subfamily. In terms of assembly, part of the 50S ribosomal subunit. The cofactor is Zn(2+).

Its function is as follows. Binds the 23S rRNA. This is Large ribosomal subunit protein bL31 from Baumannia cicadellinicola subsp. Homalodisca coagulata.